The chain runs to 445 residues: NAD(P)H coenzyme A polysulfide/persulfide reductase (445 aa).

16-17 (AA) is an FAD binding site. A CoA-binding site is contributed by R27. FAD is bound by residues 38–39 (EA) and 45–47 (HAP). Residues 44 to 48 (SHAPC), 65 to 66 (YY), and R75 contribute to the CoA site. C48 acts as the Redox-active in catalysis. FAD is bound by residues V85, D283, and A301. Positions 305 and 361 each coordinate CoA. Y425 serves as a coordination point for FAD. Residues W433 and R441 each contribute to the CoA site.

Belongs to the class-III pyridine nucleotide-disulfide oxidoreductase family. As to quaternary structure, homodimer. Homotetramer. It depends on FAD as a cofactor.

It carries out the reaction NADP(+) + 2 CoA = CoA-disulfide + NADPH + H(+). The catalysed reaction is NAD(+) + 2 CoA = CoA-disulfide + NADH + H(+). In terms of biological role, catalyzes the NAD(P)H-dependent reduction of polysulfide, CoA-polysulfides, and CoA persulfide, as well as the reduction of a range of other small persulfides, including TNB and glutathione persulfides. The likely in vivo substrates are di-, poly-, and persulfide derivatives of coenzyme A, although polysulfide itself is also efficiently reduced. Shows coenzyme A disulfide reductase (CoADR) activity with both NADH and NADPH, with a preference for NADPH. May also play a role in the reduction of elemental sulfur. The sequence is that of NAD(P)H coenzyme A polysulfide/persulfide reductase from Pyrococcus horikoshii (strain ATCC 700860 / DSM 12428 / JCM 9974 / NBRC 100139 / OT-3).